A 238-amino-acid polypeptide reads, in one-letter code: Uridylate kinase (238 aa).

Residue 13 to 16 coordinates ATP; it reads KLSG. Residue Gly53 coordinates UMP. 2 residues coordinate ATP: Gly54 and Arg58. Residues Asp73 and 134 to 141 each bind UMP; that span reads AGLPYFST. The ATP site is built by Asn162, Tyr168, and Asp171.

The protein belongs to the UMP kinase family. Homohexamer.

Its subcellular location is the cytoplasm. It catalyses the reaction UMP + ATP = UDP + ADP. The protein operates within pyrimidine metabolism; CTP biosynthesis via de novo pathway; UDP from UMP (UMPK route): step 1/1. With respect to regulation, inhibited by UTP. Catalyzes the reversible phosphorylation of UMP to UDP. This Clavibacter michiganensis subsp. michiganensis (strain NCPPB 382) protein is Uridylate kinase.